The primary structure comprises 340 residues: MSVTGLPFDDFRVLLRDLPGPDSQALVAARDRDRQLTKPPGSLGRLEEIAMWLAAWSGRAPAVNRPLVAIFAGNHGVARHGITPFPSSVTQQMVENFAAGGAAINQICVAHDLGLKIFDLALDYPTGDITVEPALSERDCAATMAFGMEAIAGGTDLLCLGEMGIGNTTIAAAINLALYGGSAEDWVGPGTGSQGEMLERKIAVVKQAVEFHRDHLSDPLEVMRRLGGREIAAMAGAILAARMERIPVLIDGYVATAAAALLKAANPSALDHCLIGHVSAEPGHLKAIDKLGKTPLLALGMRLGEGTGAALAAGIVKAAAASHTGMATFEQAGVTNAGTH.

Glutamate 305 (proton acceptor) is an active-site residue.

It belongs to the CobT family.

The enzyme catalyses 5,6-dimethylbenzimidazole + nicotinate beta-D-ribonucleotide = alpha-ribazole 5'-phosphate + nicotinate + H(+). It functions in the pathway nucleoside biosynthesis; alpha-ribazole biosynthesis; alpha-ribazole from 5,6-dimethylbenzimidazole: step 1/2. Its function is as follows. Catalyzes the synthesis of alpha-ribazole-5'-phosphate from nicotinate mononucleotide (NAMN) and 5,6-dimethylbenzimidazole (DMB). The polypeptide is Nicotinate-nucleotide--dimethylbenzimidazole phosphoribosyltransferase (Allorhizobium ampelinum (strain ATCC BAA-846 / DSM 112012 / S4) (Agrobacterium vitis (strain S4))).